The primary structure comprises 432 residues: Enolase (432 aa).

Gln167 is a (2R)-2-phosphoglycerate binding site. Residue Glu209 is the Proton donor of the active site. Residues Asp246, Glu290, and Asp317 each coordinate Mg(2+). (2R)-2-phosphoglycerate contacts are provided by Lys342, Arg371, Ser372, and Lys393. Residue Lys342 is the Proton acceptor of the active site.

Belongs to the enolase family. In terms of assembly, component of the RNA degradosome, a multiprotein complex involved in RNA processing and mRNA degradation. Requires Mg(2+) as cofactor.

Its subcellular location is the cytoplasm. It localises to the secreted. The protein resides in the cell surface. The catalysed reaction is (2R)-2-phosphoglycerate = phosphoenolpyruvate + H2O. Its pathway is carbohydrate degradation; glycolysis; pyruvate from D-glyceraldehyde 3-phosphate: step 4/5. Catalyzes the reversible conversion of 2-phosphoglycerate (2-PG) into phosphoenolpyruvate (PEP). It is essential for the degradation of carbohydrates via glycolysis. This Klebsiella pneumoniae (strain 342) protein is Enolase.